Reading from the N-terminus, the 292-residue chain is MELKRENVLIEALPYMQEFYDSIMVIKVGGNAMVSAQIMEDIIKDIVLLRYVGIKPVIVHGGGPEITEKMERMGKKAEFFQGLRITDDETMEIARMVLVGNINTKIVSLIGLFGGKGVGFTGYDGRMILGHKQAAKHVLIDGVETEVDIGWVGESEVINPEILHIMLEKGYIPVISPIAVDAKGNALNINADTVAGDIAAALHAKKLILMTDVSGLLRNIKDPGSRISRVKLDDIDLLIEEGVISGGMIPKIKGAAVAVKSGVERAHIINGSVSHSMLLELFTDGGVGTMIY.

Residues Gly-62–Gly-63, Arg-84, and Asn-188 each bind substrate.

This sequence belongs to the acetylglutamate kinase family. ArgB subfamily.

The protein localises to the cytoplasm. It catalyses the reaction N-acetyl-L-glutamate + ATP = N-acetyl-L-glutamyl 5-phosphate + ADP. Its pathway is amino-acid biosynthesis; L-arginine biosynthesis; N(2)-acetyl-L-ornithine from L-glutamate: step 2/4. In terms of biological role, catalyzes the ATP-dependent phosphorylation of N-acetyl-L-glutamate. The chain is Acetylglutamate kinase from Methanosarcina mazei (strain ATCC BAA-159 / DSM 3647 / Goe1 / Go1 / JCM 11833 / OCM 88) (Methanosarcina frisia).